The chain runs to 300 residues: Tyrosine recombinase XerC (300 aa).

The region spanning 1 to 86 (MESVLDAFDQ…AVKTFTAWAV (86 aa)) is the Core-binding (CB) domain. Residues 107–294 (TLPAVLRQDQ…TVARLRAVHD (188 aa)) enclose the Tyr recombinase domain. Catalysis depends on residues R151, K175, H246, R249, and H272. Residue Y281 is the O-(3'-phospho-DNA)-tyrosine intermediate of the active site.

It belongs to the 'phage' integrase family. XerC subfamily. As to quaternary structure, forms a cyclic heterotetrameric complex composed of two molecules of XerC and two molecules of XerD.

Its subcellular location is the cytoplasm. Functionally, site-specific tyrosine recombinase, which acts by catalyzing the cutting and rejoining of the recombining DNA molecules. The XerC-XerD complex is essential to convert dimers of the bacterial chromosome into monomers to permit their segregation at cell division. It also contributes to the segregational stability of plasmids. The protein is Tyrosine recombinase XerC of Mycobacterium sp. (strain JLS).